A 185-amino-acid chain; its full sequence is MKNFEQVLKALQTGEVIAYPTEGVFGVGCDPDNPEAIQKLLELKQRPVEKGLILIAASYEQLLPYIDESQLTQEQLDQVHATWPGPYTWIMPASDKVSHWVSGQFDSIAVRVTDHPLVQKMCNAFGKPLTSTSANLTGQPPCMTTEEVEEQLGDRLVAILRGETSGRNKPSEIRDAKTSQILRQG.

A YrdC-like domain is found at 1–185; the sequence is MKNFEQVLKA…AKTSQILRQG (185 aa). The segment at 163-185 is disordered; sequence ETSGRNKPSEIRDAKTSQILRQG. The segment covering 164-177 has biased composition (basic and acidic residues); sequence TSGRNKPSEIRDAK.

Belongs to the SUA5 family. TsaC subfamily.

The protein localises to the cytoplasm. It catalyses the reaction L-threonine + hydrogencarbonate + ATP = L-threonylcarbamoyladenylate + diphosphate + H2O. Required for the formation of a threonylcarbamoyl group on adenosine at position 37 (t(6)A37) in tRNAs that read codons beginning with adenine. Catalyzes the conversion of L-threonine, HCO(3)(-)/CO(2) and ATP to give threonylcarbamoyl-AMP (TC-AMP) as the acyladenylate intermediate, with the release of diphosphate. In Vibrio campbellii (strain ATCC BAA-1116), this protein is Threonylcarbamoyl-AMP synthase.